Here is a 448-residue protein sequence, read N- to C-terminus: Glutamyl-tRNA reductase (448 aa).

Substrate is bound by residues 52–55 (TCNR), S105, 110–112 (EDQ), and Q116. C53 serves as the catalytic Nucleophile. 184–189 (GAGEMG) contributes to the NADP(+) binding site. The segment at 406–435 (DPDFGGPDQATPPEFTKGMSVEDIPDGMRD) is disordered.

This sequence belongs to the glutamyl-tRNA reductase family. In terms of assembly, homodimer.

It catalyses the reaction (S)-4-amino-5-oxopentanoate + tRNA(Glu) + NADP(+) = L-glutamyl-tRNA(Glu) + NADPH + H(+). Its pathway is porphyrin-containing compound metabolism; protoporphyrin-IX biosynthesis; 5-aminolevulinate from L-glutamyl-tRNA(Glu): step 1/2. Catalyzes the NADPH-dependent reduction of glutamyl-tRNA(Glu) to glutamate 1-semialdehyde (GSA). This Haloarcula marismortui (strain ATCC 43049 / DSM 3752 / JCM 8966 / VKM B-1809) (Halobacterium marismortui) protein is Glutamyl-tRNA reductase.